A 213-amino-acid chain; its full sequence is Orotate phosphoribosyltransferase (213 aa).

Lys-26 provides a ligand contact to 5-phospho-alpha-D-ribose 1-diphosphate. An orotate-binding site is contributed by 34 to 35; it reads FF. 5-phospho-alpha-D-ribose 1-diphosphate-binding positions include 72-73, Arg-99, Lys-100, Lys-103, His-105, and 124-132; these read YK and DDVITAGTA. Orotate-binding residues include Thr-128 and Arg-156.

The protein belongs to the purine/pyrimidine phosphoribosyltransferase family. PyrE subfamily. As to quaternary structure, homodimer. Requires Mg(2+) as cofactor.

The catalysed reaction is orotidine 5'-phosphate + diphosphate = orotate + 5-phospho-alpha-D-ribose 1-diphosphate. It functions in the pathway pyrimidine metabolism; UMP biosynthesis via de novo pathway; UMP from orotate: step 1/2. In terms of biological role, catalyzes the transfer of a ribosyl phosphate group from 5-phosphoribose 1-diphosphate to orotate, leading to the formation of orotidine monophosphate (OMP). The chain is Orotate phosphoribosyltransferase from Shigella sonnei (strain Ss046).